The primary structure comprises 400 residues: Formate-dependent phosphoribosylglycinamide formyltransferase (400 aa).

N(1)-(5-phospho-beta-D-ribosyl)glycinamide is bound by residues 22–23 (EL) and Glu-82. ATP-binding positions include Arg-115, Lys-157, 162–167 (SSGKGQ), 197–200 (EGFI), and Glu-205. The ATP-grasp domain occupies 120 to 315 (RLAAETLGVP…EFELHARAIL (196 aa)). Mg(2+) contacts are provided by Glu-274 and Glu-286. N(1)-(5-phospho-beta-D-ribosyl)glycinamide is bound by residues Asp-293, Lys-362, and 369–370 (RR).

The protein belongs to the PurK/PurT family. As to quaternary structure, homodimer.

The enzyme catalyses N(1)-(5-phospho-beta-D-ribosyl)glycinamide + formate + ATP = N(2)-formyl-N(1)-(5-phospho-beta-D-ribosyl)glycinamide + ADP + phosphate + H(+). Its pathway is purine metabolism; IMP biosynthesis via de novo pathway; N(2)-formyl-N(1)-(5-phospho-D-ribosyl)glycinamide from N(1)-(5-phospho-D-ribosyl)glycinamide (formate route): step 1/1. Its function is as follows. Involved in the de novo purine biosynthesis. Catalyzes the transfer of formate to 5-phospho-ribosyl-glycinamide (GAR), producing 5-phospho-ribosyl-N-formylglycinamide (FGAR). Formate is provided by PurU via hydrolysis of 10-formyl-tetrahydrofolate. In Variovorax paradoxus (strain S110), this protein is Formate-dependent phosphoribosylglycinamide formyltransferase.